The primary structure comprises 662 residues: Threonine--tRNA ligase (662 aa).

One can recognise a TGS domain in the interval 1–64; sequence MSQSVSLTFP…ADGKIEIITR (64 aa). Residues 245–547 are catalytic; that stretch reads DHRRLGREMD…LIENFAGHMP (303 aa). Zn(2+) is bound by residues cysteine 341, histidine 392, and histidine 524.

The protein belongs to the class-II aminoacyl-tRNA synthetase family. As to quaternary structure, homodimer. Zn(2+) serves as cofactor.

The protein localises to the cytoplasm. It carries out the reaction tRNA(Thr) + L-threonine + ATP = L-threonyl-tRNA(Thr) + AMP + diphosphate + H(+). In terms of biological role, catalyzes the attachment of threonine to tRNA(Thr) in a two-step reaction: L-threonine is first activated by ATP to form Thr-AMP and then transferred to the acceptor end of tRNA(Thr). Also edits incorrectly charged L-seryl-tRNA(Thr). In Rhizobium rhizogenes (strain K84 / ATCC BAA-868) (Agrobacterium radiobacter), this protein is Threonine--tRNA ligase.